Here is a 441-residue protein sequence, read N- to C-terminus: MLLPGPARQPPTPQPVQHPGLRRQVEPPGQLLRLFYCTVLVCSKEISALTDFSGYLTKLLQNHTTYACDGDYLNLQCPRHSTISVQSAFYGQDYQMCSSQKPASQREDSLTCVAATTFQKVLDECQNQRACHLLVNSRVFGPDLCPGSSKYLLVSFKCQPNELKNKTVCEDQELKLHCHESKFLNIYSATYGRRTQERDICSSEAERLPPFDCLSYSALQVLSRRCYGKQRCKIIVNNHHFGSPCLPGVKKYLTVTYACVPKNILTAIDPAIANLKPSLKQKDGEYGINFDPSGSKVPRKDGILVSNSLAAFAYIRAHPERAALLFVSSVCIGLALTLCALVIRESCAKDFRDLQLGREQLVPGSDKVEEDSEDEEEEEDSSESDFPGELSGFCRTSYPVYSSIEAAELAERIERREQIIQEIWMNSGLDTSLPRNMGQFY.

Residues 1–23 form a disordered region; that stretch reads MLLPGPARQPPTPQPVQHPGLRR. The N-terminal stretch at 1 to 48 is a signal peptide; sequence MLLPGPARQPPTPQPVQHPGLRRQVEPPGQLLRLFYCTVLVCSKEISA. Positions 7-16 are enriched in pro residues; sequence ARQPPTPQPV. Over 49-322 the chain is Extracellular; sequence LTDFSGYLTK…AYIRAHPERA (274 aa). N-linked (GlcNAc...) asparagine glycosylation is present at Asn-62. One can recognise an SUEL-type lectin 1 domain in the interval 67–159; the sequence is ACDGDYLNLQ…KYLLVSFKCQ (93 aa). Asn-165 carries N-linked (GlcNAc...) asparagine glycosylation. One can recognise an SUEL-type lectin 2 domain in the interval 168–260; that stretch reads VCEDQELKLH…KYLTVTYACV (93 aa). Residues 323–343 traverse the membrane as a helical segment; it reads ALLFVSSVCIGLALTLCALVI. The Cytoplasmic segment spans residues 344 to 441; the sequence is RESCAKDFRD…SLPRNMGQFY (98 aa). The interval 362–391 is disordered; the sequence is VPGSDKVEEDSEDEEEEEDSSESDFPGELS. Acidic residues predominate over residues 368–383; sequence VEEDSEDEEEEEDSSE.

Belongs to the EVA1 family.

The protein localises to the cell membrane. In terms of biological role, binds heparin. The polypeptide is Protein eva-1 homolog C (EVA1C) (Pan troglodytes (Chimpanzee)).